Consider the following 195-residue polypeptide: Ribosome maturation factor RimM (195 aa).

The PRC barrel domain occupies 101-191 (ADEWYPKDLI…YLTLDPPGGL (91 aa)).

It belongs to the RimM family. Binds ribosomal protein uS19.

It localises to the cytoplasm. An accessory protein needed during the final step in the assembly of 30S ribosomal subunit, possibly for assembly of the head region. Essential for efficient processing of 16S rRNA. May be needed both before and after RbfA during the maturation of 16S rRNA. It has affinity for free ribosomal 30S subunits but not for 70S ribosomes. This chain is Ribosome maturation factor RimM, found in Bifidobacterium adolescentis (strain ATCC 15703 / DSM 20083 / NCTC 11814 / E194a).